Reading from the N-terminus, the 603-residue chain is Variable flagella 3 (603 aa).

Residues 169–289 are a coiled coil; that stretch reads GGEVSAELRR…TEDLEARDRR (121 aa). Residues 288-297 are compositionally biased toward basic and acidic residues; that stretch reads RRMNSTDRIR. Disordered stretches follow at residues 288–526 and 539–564; these read RRMN…PARA and AGRG…SSKS. Residues 337–348 are compositionally biased toward low complexity; that stretch reads SRSNSRGRGTSS. Basic and acidic residues predominate over residues 364 to 380; that stretch reads PRFDPTEYVRQRKERES. Positions 397–406 are enriched in polar residues; it reads AGTSRASSVV. Residues 486–510 are compositionally biased toward gly residues; sequence GASGGGAGGWSKFPGGGGGGVGGSG. Residues 511 to 520 are compositionally biased toward polar residues; it reads QRISSNSPRS.

It belongs to the CCDC61 family.

It is found in the cytoplasm. It localises to the cytoskeleton. Its subcellular location is the flagellum basal body. Its function is as follows. Required for normal flagella and striated fiber formation. The chain is Variable flagella 3 from Chlamydomonas reinhardtii (Chlamydomonas smithii).